Here is a 673-residue protein sequence, read N- to C-terminus: Transcription initiation factor IIB (673 aa).

Residues 38 to 69 form a TFIIB-type zinc finger; that stretch reads EEIVCPICGSKEVVKDYERAEIVCAKCGCVIK. Residues Cys42, Cys45, Cys61, and Cys64 each coordinate Zn(2+). The region spanning 238 to 357 is the DOD-type homing endonuclease domain; the sequence is ILGYIIAEGY…VIFLLLQIKE (120 aa). 2 tandem repeats follow at residues 490–573 and 584–665.

This sequence belongs to the TFIIB family. In terms of processing, this protein undergoes a protein self splicing that involves a post-translational excision of the intervening region (intein) followed by peptide ligation.

Its function is as follows. Stabilizes TBP binding to an archaeal box-A promoter. Also responsible for recruiting RNA polymerase II to the pre-initiation complex (DNA-TBP-TFIIB). The protein is Transcription initiation factor IIB (tfb) of Methanocaldococcus jannaschii (strain ATCC 43067 / DSM 2661 / JAL-1 / JCM 10045 / NBRC 100440) (Methanococcus jannaschii).